The following is a 398-amino-acid chain: Histidinol dehydrogenase (398 aa).

The NAD(+) site is built by tyrosine 114, glutamine 176, and asparagine 199. Substrate contacts are provided by threonine 222, glutamine 244, and histidine 247. Zn(2+) contacts are provided by glutamine 244 and histidine 247. Active-site proton acceptor residues include glutamate 298 and histidine 299. Substrate-binding residues include histidine 299, aspartate 331, glutamate 384, and histidine 389. Aspartate 331 contributes to the Zn(2+) binding site. Residue histidine 389 coordinates Zn(2+).

It belongs to the histidinol dehydrogenase family. Requires Zn(2+) as cofactor.

It carries out the reaction L-histidinol + 2 NAD(+) + H2O = L-histidine + 2 NADH + 3 H(+). The protein operates within amino-acid biosynthesis; L-histidine biosynthesis; L-histidine from 5-phospho-alpha-D-ribose 1-diphosphate: step 9/9. Catalyzes the sequential NAD-dependent oxidations of L-histidinol to L-histidinaldehyde and then to L-histidine. In Saccharolobus solfataricus (strain ATCC 35092 / DSM 1617 / JCM 11322 / P2) (Sulfolobus solfataricus), this protein is Histidinol dehydrogenase (hisD).